The primary structure comprises 189 residues: UPF0301 protein RPR_01165 (189 aa).

Belongs to the UPF0301 (AlgH) family.

The polypeptide is UPF0301 protein RPR_01165 (Rickettsia peacockii (strain Rustic)).